Reading from the N-terminus, the 545-residue chain is Ribulokinase (545 aa).

This sequence belongs to the ribulokinase family.

It carries out the reaction D-ribulose + ATP = D-ribulose 5-phosphate + ADP + H(+). The catalysed reaction is L-ribulose + ATP = L-ribulose 5-phosphate + ADP + H(+). The protein operates within carbohydrate degradation; L-arabinose degradation via L-ribulose; D-xylulose 5-phosphate from L-arabinose (bacterial route): step 2/3. This Staphylococcus aureus (strain bovine RF122 / ET3-1) protein is Ribulokinase.